The following is a 173-amino-acid chain: ATP-dependent protease subunit HslV (173 aa).

T2 is an active-site residue. G158, D161, and S164 together coordinate Na(+).

The protein belongs to the peptidase T1B family. HslV subfamily. A double ring-shaped homohexamer of HslV is capped on each side by a ring-shaped HslU homohexamer. The assembly of the HslU/HslV complex is dependent on binding of ATP.

Its subcellular location is the cytoplasm. The enzyme catalyses ATP-dependent cleavage of peptide bonds with broad specificity.. Its activity is regulated as follows. Allosterically activated by HslU binding. In terms of biological role, protease subunit of a proteasome-like degradation complex believed to be a general protein degrading machinery. The protein is ATP-dependent protease subunit HslV of Haemophilus ducreyi (strain 35000HP / ATCC 700724).